The following is a 214-amino-acid chain: Large ribosomal subunit protein uL3 (214 aa).

Residues 130–151 show a composition bias toward polar residues; that stretch reads FSSNRASHGNSRSHNTPGSIGQ. The disordered stretch occupies residues 130–163; it reads FSSNRASHGNSRSHNTPGSIGQAQDPGRVFPGKR. Glutamine 153 is modified (N5-methylglutamine).

Belongs to the universal ribosomal protein uL3 family. As to quaternary structure, part of the 50S ribosomal subunit. Forms a cluster with proteins L14 and L19. In terms of processing, methylated by PrmB.

In terms of biological role, one of the primary rRNA binding proteins, it binds directly near the 3'-end of the 23S rRNA, where it nucleates assembly of the 50S subunit. In Chromobacterium violaceum (strain ATCC 12472 / DSM 30191 / JCM 1249 / CCUG 213 / NBRC 12614 / NCIMB 9131 / NCTC 9757 / MK), this protein is Large ribosomal subunit protein uL3.